The chain runs to 209 residues: MTQTHSSEKRRRLEPGRLVLASHNQGKLREIRELLSPFGLETVSAAELGLPEPVEDGNSFIANAEIKARFVAEKTGSVALADDSGLCVEALDEAPGIYSARWAGEPRDFDKAMEKVHQELTAKGAEASKRAHFVCALSLCWPDGHVENFEGHVWGNLIWPPRGDRGFGYDPMFVADGHQQSFAEIGAEAKKAISHRSEAFKQLLAACLR.

Substrate is bound at residue 22–27; the sequence is SHNQGK. Asp83 serves as the catalytic Proton acceptor. Asp83 is a binding site for Mg(2+). Substrate is bound by residues Ser84, 167-170, Lys190, and 195-196; these read FGYD and HR.

Belongs to the HAM1 NTPase family. Homodimer. It depends on Mg(2+) as a cofactor.

It carries out the reaction XTP + H2O = XMP + diphosphate + H(+). The catalysed reaction is dITP + H2O = dIMP + diphosphate + H(+). The enzyme catalyses ITP + H2O = IMP + diphosphate + H(+). In terms of biological role, pyrophosphatase that catalyzes the hydrolysis of nucleoside triphosphates to their monophosphate derivatives, with a high preference for the non-canonical purine nucleotides XTP (xanthosine triphosphate), dITP (deoxyinosine triphosphate) and ITP. Seems to function as a house-cleaning enzyme that removes non-canonical purine nucleotides from the nucleotide pool, thus preventing their incorporation into DNA/RNA and avoiding chromosomal lesions. The sequence is that of dITP/XTP pyrophosphatase from Zymomonas mobilis subsp. mobilis (strain ATCC 31821 / ZM4 / CP4).